We begin with the raw amino-acid sequence, 468 residues long: Glutamate--tRNA ligase (468 aa).

The 'HIGH' region motif lies at 8–18 (PSPTGDPHVGT). The short motif at 243–247 (KISKR) is the 'KMSKS' region element. Lys-246 contacts ATP.

It belongs to the class-I aminoacyl-tRNA synthetase family. Glutamate--tRNA ligase type 1 subfamily. In terms of assembly, monomer.

The protein localises to the cytoplasm. The enzyme catalyses tRNA(Glu) + L-glutamate + ATP = L-glutamyl-tRNA(Glu) + AMP + diphosphate. Functionally, catalyzes the attachment of glutamate to tRNA(Glu) in a two-step reaction: glutamate is first activated by ATP to form Glu-AMP and then transferred to the acceptor end of tRNA(Glu). The chain is Glutamate--tRNA ligase from Thermus thermophilus (strain ATCC BAA-163 / DSM 7039 / HB27).